Here is a 3726-residue protein sequence, read N- to C-terminus: Zinc finger homeobox protein 3 (3726 aa).

Disordered stretches follow at residues 1 to 79 (MEGC…SKEV) and 95 to 129 (MEHHCPGTHPPPALREESASDTSEEGEEESDVENL). The C2H2-type 1 zinc-finger motif lies at 79–103 (VSCNECSASFSSLQTYMEHHCPGTH). Residues 116-126 (TSEEGEEESDV) show a composition bias toward acidic residues. The C2H2-type 2 zinc finger occupies 282–305 (LMCFLCKLSFGYVRSFVTHAVHDH). Positions 417-557 (SVPLGPLASS…GPASTTSNSA (141 aa)) are disordered. Phosphoserine is present on Ser-426. Residue Thr-428 is modified to Phosphothreonine. Residues 431–459 (SEGKDSGAAEGDKQESGGHQDCFSEKVEP) show a composition bias toward basic and acidic residues. 2 stretches are compositionally biased toward acidic residues: residues 460-491 (AEEEEAEEEEEEEEEAEEEEEEEEEEEEEEEE) and 500-510 (DLEEELEDSPS). Residues 528-557 (SNPSISNSPLMPNVLQTLSRGPASTTSNSA) are compositionally biased toward polar residues. Phosphoserine occurs at positions 535 and 573. Residues 590-621 (DFADESANKDSATAPEPNESTEGDDGGFVPHH) are disordered. C2H2-type zinc fingers lie at residues 641–664 (VECPKCDTVLGSSRSLGGHMTMMH), 672–695 (LKCPKCNWHYKYQQTLEAHMKEKH), and 727–751 (FRCEVCNYSTTTKGNLSIHMQSDKH). The C2H2-type 6; atypical zinc-finger motif lies at 805-829 (WRCEVCDYETNVARNLRIHMTSEKH). The C2H2-type 7; degenerate zinc finger occupies 946 to 969 (FQCAVCNKFTTDNLDMLGLHMNVE). Residues 985–1009 (YQCKLCRYNTQLKANFQLHCKTDKH) form a C2H2-type 8; atypical zinc finger. The C2H2-type 9; atypical zinc finger occupies 1041–1065 (LKCNACDYYTNSLEKLRLHTVNSRH). A C2H2-type 10; atypical zinc finger spans residues 1089-1113 (YHCVLCNYSTKAKLNLIQHVRSMKH). Residues 1125–1228 (LQKGLPEEDE…KRPKASEEIK (104 aa)) form a disordered region. Positions 1149 to 1159 (DPEEPVEDAEG) are enriched in acidic residues. 2 stretches are compositionally biased toward polar residues: residues 1175 to 1191 (GSGSEEGQSKRAASSSQ) and 1199 to 1217 (SPATTKRTSFPGSSETPLS). Ser-1207 is modified (phosphoserine). Residues 1233–1256 (YQCPYCKYSNADVNRLRVHAMTQH) form a C2H2-type 11; atypical zinc finger. A C2H2-type 12 zinc finger spans residues 1262-1285 (LRCPLCQDMLNNKIHLQLHLTHLH). The disordered stretch occupies residues 1320–1361 (DGNSTLEEVGKQPEASEDPGKNILPPASMEHGGDLKPTSADP). 3 C2H2-type zinc fingers span residues 1370–1395 (FLCWKKGCNQVFKTSATLQTHFNEVH), 1411–1433 (YRCNQCSLAFKTIEKLQLHSQYH), and 1439–1462 (TMCCLCQRSFRTFQALKKHLETSH). The tract at residues 1500–1539 (EEDKEEESDLEDKQSPTGSDSGSVQEDSGSEPKRALPFRK) is disordered. Over residues 1514-1526 (SPTGSDSGSVQED) the composition is skewed to polar residues. The segment at 1555 to 1579 (YKCTVCKESFTQKNILLVHYNSVSH) adopts a C2H2-type 16 zinc-finger fold. Ser-1600 is modified (phosphoserine). A C2H2-type 17 zinc finger spans residues 1606-1630 (FKCNTCNVAYSQSSTLEIHMRSVLH). Disordered stretches follow at residues 1639-1678 (LEAASGNSNGTGNSGGVSLSSSTPSPVGSSGANNTFTATN), 1706-1738 (NPISANIASPSEPKEANRKKLADMIASRQQQQQ), and 1866-1943 (LSQS…PRIA). The span at 1643-1669 (SGNSNGTGNSGGVSLSSSTPSPVGSSG) shows a compositional bias: low complexity. Over residues 1717–1727 (EPKEANRKKLA) the composition is skewed to basic and acidic residues. The span at 1866–1878 (LSQSHSALLQPSQ) shows a compositional bias: low complexity. The segment covering 1879 to 1902 (HPEKKNKVVIKEKDKESQREREGP) has biased composition (basic and acidic residues). Residues 1990–2013 (LECDSCGKLFSNILILKSHQEHVH) form a C2H2-type 18 zinc finger. Disordered stretches follow at residues 2037-2089 (YPLR…AQPS) and 2211-2249 (NKDSPYNFSNPPITSLEELKIDSRPPSPEPQKQEYWGSK). A compositionally biased stretch (pro residues) spans 2041–2066 (PQTPEPPPPPPPPPPPPLPTAPPQPA). The segment at residues 2152 to 2211 (NKRPRTRITDDQLRVLRQYFDINNSPSEEQIKEMADKSGLPQKVIKHWFRNTLFKERQRN) is a DNA-binding region (homeobox 1). Polar residues predominate over residues 2214–2223 (SPYNFSNPPI). The segment at residues 2249 to 2308 (KRSSRTRFTDYQLRVLQDFFDANAYPKDDEFEQLSNLLNLPTRVIVVWFQNARQKARKNY) is a DNA-binding region (homeobox 2). Residues 2335–2358 (YQCKKCSLVFQRIFDLIKHQKKLC) form a C2H2-type 19; atypical zinc finger. Lys-2356 participates in a covalent cross-link: Glycyl lysine isopeptide (Lys-Gly) (interchain with G-Cter in SUMO1). Disordered stretches follow at residues 2383–2405 (TPTSSSCSTPMPSQAYSTPAPSA) and 2429–2529 (NSKA…PQQL). Positions 2458–2478 (QPKPEMQQQLEQLEQKTNAPQ) are enriched in low complexity. Residues 2479–2507 (PKLPQPAAPSLPQPPPQAPPPQCPLPQSS) are compositionally biased toward pro residues. Residues 2508–2521 (PSPSQLSHLPLKPL) are compositionally biased toward low complexity. The C2H2-type 20 zinc finger occupies 2539–2561 (YQCDQCKLAFPSFEHWQEHQQLH). Residues 2624–2626 (KRK) carry the Nuclear localization signal motif. The interval 2628 to 2656 (EEKASASPGENDSGTGGEEPQRDKRLRTT) is disordered. Phosphoserine is present on Ser-2634. A DNA-binding region (homeobox 3) is located at residues 2650 to 2709 (DKRLRTTITPEQLEILYQKYLLDSNPTRKMLDHIAHEVGLKKRVVQVWFQNTRARERKGQ). Residues 2720-2743 (RRCPFCRALFKAKTALEAHIRSRH) form a C2H2-type 21 zinc finger. Residues 2780–2789 (SHLPPSSSDG) are compositionally biased toward polar residues. Positions 2780–2805 (SHLPPSSSDGQGVPLSPVSKTMELSP) are disordered. 2 positions are modified to phosphoserine: Ser-2795 and Ser-2804. Lys-2815 participates in a covalent cross-link: Glycyl lysine isopeptide (Lys-Gly) (interchain with G-Cter in SUMO1); alternate. Lys-2815 participates in a covalent cross-link: Glycyl lysine isopeptide (Lys-Gly) (interchain with G-Cter in SUMO2); alternate. The interval 2850 to 2877 (AITDTTTGDEGNADNDSATGIATETKSS) is disordered. Phosphoserine is present on residues Ser-2900 and Ser-2904. The tract at residues 2920 to 2955 (VDYSETSSLADPCSPSPGASGSAGKSGDGGDRPGQK) is disordered. Over residues 2929 to 2944 (ADPCSPSPGASGSAGK) the composition is skewed to low complexity. A DNA-binding region (homeobox 4) is located at residues 2952 to 3011 (PGQKRFRTQMTNLQLKVLKSCFNDYRTPTMLECEVLGNDIGLPKRVVQVWFQNARAKEKK). A C2H2-type 22 zinc finger spans residues 3032 to 3056 (TECTLCGIKYSARLSVRDHIFSQQH). 2 disordered regions span residues 3145–3274 (FTPA…AGTG) and 3415–3476 (QQQQ…SASA). Positions 3147–3156 (PANTALTSPK) are enriched in polar residues. Positions 3181-3199 (PSSASLSSPTPAQATMAMA) are enriched in low complexity. Residues 3200 to 3221 (PQPPPQPQQPQPPVQQPPPPPA) are compositionally biased toward pro residues. A compositionally biased stretch (low complexity) spans 3222–3234 (AQQIPAPQLTPQQ). Over residues 3235-3267 (QRKDKDGEKGKEKEKAHKGKGEPLPVPKKEKGE) the composition is skewed to basic and acidic residues. Residue Lys-3262 forms a Glycyl lysine isopeptide (Lys-Gly) (interchain with G-Cter in SUMO1) linkage. Ser-3434 carries the phosphoserine modification. Over residues 3435 to 3453 (PDKDPAKESPKPEEQKNVP) the composition is skewed to basic and acidic residues. Phosphoserine is present on Ser-3457. The segment at 3552–3576 (YHCLACESALCGEEALSQHLESALH) adopts a C2H2-type 23 zinc-finger fold. Residues 3588–3726 (AKEHPSLLPH…TSVGTDTFRL (139 aa)) are disordered. 2 stretches are compositionally biased toward low complexity: residues 3605 to 3618 (STASTSQSAAHSND) and 3645 to 3677 (SRASAAKPPSFPPLSSSSTVTSSSCSTSGVQPS). Phosphoserine is present on Ser-3616. Residue Ser-3700 is modified to Phosphoserine. The span at 3715-3726 (GLTSVGTDTFRL) shows a compositional bias: polar residues.

As to quaternary structure, interacts with ALKBH4 and PIAS3. Interacts with FNBP3. Interacts with ESR1, RUNX3, TRIM25, SMAD2 and SMAD3. Post-translationally, phosphorylated at Ser-2634 in both embryonic and adult brain. Phosphorylation at Ser-1600, Ser-2795, Ser-2804, Ser-2900, Ser-3434, Ser-3616 and Ser-3700 is restricted to the embryonic brain. Hyperphosphorylation in embryonic brain protects ZFHX3 from calpain/CAPN1-mediated degradation. In terms of processing, ubiquitinated, leading to its proteasomal degradation. Nuclear localization is essential for its sumoylation. Expressed in suprachiasmatic nucleus (SCN) of the brain (at protein level). Expressed in skeletal muscle. Levels of expression are high in myoblasts but low in differentiated muscle. Expressed in the heart, primarily in the atria.

It localises to the nucleus. Its subcellular location is the cytoplasm. Transcriptional regulator which can act as an activator or a repressor. Inhibits the enhancer element of the AFP gene by binding to its AT-rich core sequence. In concert with SMAD-dependent TGF-beta signaling can repress the transcription of AFP via its interaction with SMAD2/3. Regulates the circadian locomotor rhythms via transcriptional activation of neuropeptidergic genes which are essential for intercellular synchrony and rhythm amplitude in the suprachiasmatic nucleus (SCN) of the brain. Regulator of myoblasts differentiation through the binding to the AT-rich sequence of MYF6 promoter and promoter repression. Down-regulates the MUC5AC promoter in gastric cancer. In association with RUNX3, up-regulates CDKN1A promoter activity following TGF-beta stimulation. The protein is Zinc finger homeobox protein 3 (Zfhx3) of Mus musculus (Mouse).